The chain runs to 2995 residues: Striated muscle preferentially expressed protein kinase (2995 aa).

The Ig-like 1 domain occupies 27 to 109 (PPVFLRKLKW…GEARTSAVLA (83 aa)). An intrachain disulfide couples Cys50 to Cys93. Disordered regions lie at residues 250–272 (ITGS…KVSQ) and 384–467 (LTQT…NSKP). The span at 384-404 (LTQTDKQSSVSTESVPTQVIQ) shows a compositional bias: polar residues. Residues 454 to 464 (PPEMNENQENN) are compositionally biased toward low complexity. Ig-like domains follow at residues 613–701 (PAES…EELI) and 714–802 (PLFT…AELY). Cys639 and Cys691 are joined by a disulfide. The interval 815–834 (SRLEKMPSIPEEPEVPEGEV) is disordered. Positions 840–930 (PDFIKPLSDL…AACYAHLYVA (91 aa)) constitute an Ig-like 4 domain. Cysteines 861 and 912 form a disulfide. Residues 937-1035 (PDGPPVIESV…TDLVQLVDRG (99 aa)) enclose the Fibronectin type-III 1 domain. Positions 1135 to 1224 (PPIFETIMED…GSVSCKAELT (90 aa)) constitute an Ig-like 5 domain. The region spanning 1255–1505 (YDIHKEIGRG…ATECLLHPWF (251 aa)) is the Protein kinase 1 domain. ATP contacts are provided by residues 1261–1269 (IGRGAFSYV) and Lys1283. The active-site Proton acceptor is Asp1372. Disordered stretches follow at residues 1559–1582 (VPRN…DIDE), 1776–1839 (RNFR…STGD), 2017–2058 (LKRL…TGLK), 2163–2189 (VHSR…VEKQ), 2211–2254 (SGIS…KMDI), and 2268–2322 (SKET…KEDF). The span at 1786–1795 (SGDSGTFNND) shows a compositional bias: polar residues. Low complexity predominate over residues 2274–2284 (SSSSAHSIESS). Basic and acidic residues predominate over residues 2289–2299 (TEIRSRWDRWG). The Ig-like 6 domain occupies 2323-2413 (PPVFHIALKD…ASVTTSCILT (91 aa)). Residues Cys2345 and Cys2397 are joined by a disulfide bond. In terms of domain architecture, Fibronectin type-III 2 spans 2420 to 2513 (CPGTPEIRQI…DGVSIDTKVT (94 aa)). 2 disordered regions span residues 2574–2609 (PKMS…YTAP) and 2648–2676 (GEGA…LRQG). Polar residues-rich tracts occupy residues 2587-2605 (SSVN…SPRS) and 2652-2674 (SSPT…TTLR). The Protein kinase 2 domain occupies 2682–2934 (YSFLDEKARG…IKDCLNHSWL (253 aa)). ATP contacts are provided by residues 2688–2696 (KARGRFGVI) and Lys2711. Asp2801 functions as the Proton acceptor in the catalytic mechanism.

Belongs to the protein kinase superfamily. CAMK Ser/Thr protein kinase family. May be autophosphorylated. Preferentially expressed in striated muscle.

It is found in the nucleus. It carries out the reaction L-seryl-[protein] + ATP = O-phospho-L-seryl-[protein] + ADP + H(+). It catalyses the reaction L-threonyl-[protein] + ATP = O-phospho-L-threonyl-[protein] + ADP + H(+). The chain is Striated muscle preferentially expressed protein kinase (speg) from Danio rerio (Zebrafish).